Consider the following 387-residue polypeptide: Early growth response protein 3 (387 aa).

The segment at 241–283 is disordered; that stretch reads PGFGSLPQPPLTLKPIRPRKYPNRPSKTPLHERPHACPAEGCD. Over residues 269-283 the composition is skewed to basic and acidic residues; it reads PLHERPHACPAEGCD. 3 consecutive C2H2-type zinc fingers follow at residues 275-299, 305-327, and 333-355; these read HACP…LRIH, FQCR…IRTH, and FACE…AKIH. Positions 348 to 387 are disordered; it reads RKRHAKIHLKQKEKKSEKGGAPSASSAPTVSLAPVVTTCA. The span at 350 to 360 shows a compositional bias: basic residues; that stretch reads RHAKIHLKQKE.

This sequence belongs to the EGR C2H2-type zinc-finger protein family.

Its subcellular location is the nucleus. Its function is as follows. Probable transcription factor involved in muscle spindle development. The sequence is that of Early growth response protein 3 (Egr3) from Mus musculus (Mouse).